A 520-amino-acid chain; its full sequence is MHTFLRSTALVVAGLSARALASIGPVTDFHIVNAAVSPDGFSRQAVLAEGVFPGPLIAGNKGDNFQINVIDELTNATMLKTTTIHWHGFFQHGTNWADGPAFINQCPIASGDSFLYNFQVPDQAGTFWYHSHLSTQYCDGLRGPFVVYDPADPYLDQYDVDDDSTVITLADWYHTAARLGSPFPAADTTLINGLGRCGEAGCPVSDLAVISVTKGKRYRFRLVSISCDSFFTFSIDGHSLNVIEVDATNHQPLTVDELTIYAGQRYSFILTADQDVDNYWIRANPGIGITTGFAGGINSAILRYDGADVVEPTTTQATSPVVLSESNLAPLTNAAAPGLPEVGGVDLALNFNLTFDGPSLKFQINGVTFVPPTVPVLLQILSGAQSAADLLPSGSVYALPSNATIELSLPAGALGGPHPFHLHGHTFSVVRPAGSTTYNYVNPVQRDVVSIGNTGDNVTIRFDTNNPGPWFLHCHIDWHLEAGFAVVFAEDIPDVASINPVPQDWSNLCPIYNALDASDH.

The signal sequence occupies residues 1-21 (MHTFLRSTALVVAGLSARALA). Plastocyanin-like domains lie at 22-148 (SIGP…FVVY) and 160-304 (VDDD…ILRY). N75 carries an N-linked (GlcNAc...) asparagine glycan. Cu cation is bound by residues H85, H87, H130, and H132. 2 disulfide bridges follow: C106/C509 and C138/C227. 2 N-linked (GlcNAc...) asparagine glycosylation sites follow: N352 and N402. The 124-residue stretch at 373–496 (TVPVLLQILS…VFAEDIPDVA (124 aa)) folds into the Plastocyanin-like 3 domain. The Cu cation site is built by H418, H421, H423, H473, C474, H475, and H479.

This sequence belongs to the multicopper oxidase family. Requires Cu cation as cofactor.

Its subcellular location is the secreted. It catalyses the reaction 4 hydroquinone + O2 = 4 benzosemiquinone + 2 H2O. Lignin degradation and detoxification of lignin-derived products. This is Laccase (LAC) from Phlebia radiata (White-rot fungus).